A 255-amino-acid chain; its full sequence is Triosephosphate isomerase (255 aa).

9–11 serves as a coordination point for substrate; sequence NWK. Residue H95 is the Electrophile of the active site. The active-site Proton acceptor is the E167. Substrate is bound by residues G173, S212, and 233–234; that span reads GG.

It belongs to the triosephosphate isomerase family. As to quaternary structure, homodimer.

Its subcellular location is the cytoplasm. The enzyme catalyses D-glyceraldehyde 3-phosphate = dihydroxyacetone phosphate. It participates in carbohydrate biosynthesis; gluconeogenesis. Its pathway is carbohydrate degradation; glycolysis; D-glyceraldehyde 3-phosphate from glycerone phosphate: step 1/1. Functionally, involved in the gluconeogenesis. Catalyzes stereospecifically the conversion of dihydroxyacetone phosphate (DHAP) to D-glyceraldehyde-3-phosphate (G3P). The polypeptide is Triosephosphate isomerase (Salmonella agona (strain SL483)).